A 377-amino-acid polypeptide reads, in one-letter code: Queuine tRNA-ribosyltransferase (377 aa).

Asp92 acts as the Proton acceptor in catalysis. Substrate-binding positions include 92-96 (DSGGF), Asp146, Gln190, and Gly217. Positions 248–254 (GVGRPED) are RNA binding. Asp267 serves as the catalytic Nucleophile. The RNA binding; important for wobble base 34 recognition stretch occupies residues 272-276 (TRHAR). Cys305, Cys307, Cys310, and His337 together coordinate Zn(2+).

This sequence belongs to the queuine tRNA-ribosyltransferase family. In terms of assembly, homodimer. Within each dimer, one monomer is responsible for RNA recognition and catalysis, while the other monomer binds to the replacement base PreQ1. The cofactor is Zn(2+).

The catalysed reaction is 7-aminomethyl-7-carbaguanine + guanosine(34) in tRNA = 7-aminomethyl-7-carbaguanosine(34) in tRNA + guanine. It participates in tRNA modification; tRNA-queuosine biosynthesis. Functionally, catalyzes the base-exchange of a guanine (G) residue with the queuine precursor 7-aminomethyl-7-deazaguanine (PreQ1) at position 34 (anticodon wobble position) in tRNAs with GU(N) anticodons (tRNA-Asp, -Asn, -His and -Tyr). Catalysis occurs through a double-displacement mechanism. The nucleophile active site attacks the C1' of nucleotide 34 to detach the guanine base from the RNA, forming a covalent enzyme-RNA intermediate. The proton acceptor active site deprotonates the incoming PreQ1, allowing a nucleophilic attack on the C1' of the ribose to form the product. After dissociation, two additional enzymatic reactions on the tRNA convert PreQ1 to queuine (Q), resulting in the hypermodified nucleoside queuosine (7-(((4,5-cis-dihydroxy-2-cyclopenten-1-yl)amino)methyl)-7-deazaguanosine). This Xylella fastidiosa (strain Temecula1 / ATCC 700964) protein is Queuine tRNA-ribosyltransferase.